Reading from the N-terminus, the 89-residue chain is Large ribosomal subunit protein bL27 (89 aa).

A disordered region spans residues 1–20; sequence MAHKKAGGSSRNGRDSIGRR.

This sequence belongs to the bacterial ribosomal protein bL27 family.

The sequence is that of Large ribosomal subunit protein bL27 from Ruegeria pomeroyi (strain ATCC 700808 / DSM 15171 / DSS-3) (Silicibacter pomeroyi).